Reading from the N-terminus, the 338-residue chain is Lipoate-protein ligase A (338 aa).

Residues 29-216 (PATQRVLFLW…AFFAHYGERV (188 aa)) form the BPL/LPL catalytic domain. Residues R71, 76–79 (GAVF), and K134 each bind ATP. K134 provides a ligand contact to (R)-lipoate.

The protein belongs to the LplA family. Monomer.

The protein localises to the cytoplasm. The enzyme catalyses L-lysyl-[lipoyl-carrier protein] + (R)-lipoate + ATP = N(6)-[(R)-lipoyl]-L-lysyl-[lipoyl-carrier protein] + AMP + diphosphate + H(+). The protein operates within protein modification; protein lipoylation via exogenous pathway; protein N(6)-(lipoyl)lysine from lipoate: step 1/2. It functions in the pathway protein modification; protein lipoylation via exogenous pathway; protein N(6)-(lipoyl)lysine from lipoate: step 2/2. Catalyzes both the ATP-dependent activation of exogenously supplied lipoate to lipoyl-AMP and the transfer of the activated lipoyl onto the lipoyl domains of lipoate-dependent enzymes. The chain is Lipoate-protein ligase A from Escherichia coli O9:H4 (strain HS).